Here is a 298-residue protein sequence, read N- to C-terminus: Cyclin-dependent kinase 1 (298 aa).

N-acetylserine is present on Ser-2. The region spanning 8–295 (YKRLEKVGEG…ARRAAIHPYF (288 aa)) is the Protein kinase domain. Residues 14 to 22 (VGEGTYGVV) and Lys-40 each bind ATP. Tyr-19 bears the Phosphotyrosine mark. The active-site Proton acceptor is Asp-136. Thr-169 is modified (phosphothreonine).

This sequence belongs to the protein kinase superfamily. CMGC Ser/Thr protein kinase family. CDC2/CDKX subfamily. Forms a stable but non-covalent complex with the CKS1 protein and with a cyclin.

The catalysed reaction is L-seryl-[protein] + ATP = O-phospho-L-seryl-[protein] + ADP + H(+). It carries out the reaction L-threonyl-[protein] + ATP = O-phospho-L-threonyl-[protein] + ADP + H(+). Phosphorylation at Thr-18 or Tyr-19 inactivates the enzyme, while phosphorylation at Thr-169 activates it. Functionally, cyclin-dependent kinase that acts as a master regulator of the mitotic and meiotic cell cycles. Required to drive the G1-S transition. More than 200 substrates have been identified. Substrate specificity is in part regulated by the bound cyclin protein. Phosphorylates YTA7 during S-phase to promote transcription of histones. May phosphorylate CNN1, to contribute to the enrichment of CNN1 on anaphase kinetochores. This Saccharomyces cerevisiae (strain ATCC 204508 / S288c) (Baker's yeast) protein is Cyclin-dependent kinase 1.